A 181-amino-acid polypeptide reads, in one-letter code: Inner membrane-spanning protein YciB (181 aa).

A run of 5 helical transmembrane segments spans residues 10 to 30, 50 to 70, 72 to 92, 118 to 138, and 148 to 168; these read LIIF…GALI, MHLI…VFHD, AFIK…LGVS, VTWY…YVAF, and FKVF…VFYL.

It belongs to the YciB family.

It is found in the cell inner membrane. Functionally, plays a role in cell envelope biogenesis, maintenance of cell envelope integrity and membrane homeostasis. The protein is Inner membrane-spanning protein YciB of Shewanella sp. (strain MR-7).